We begin with the raw amino-acid sequence, 256 residues long: Pimeloyl-[acyl-carrier protein] methyl ester esterase (256 aa).

Residues 15-242 (HLVLLHGWGL…AAHAPFISHP (228 aa)) enclose the AB hydrolase-1 domain. Substrate contacts are provided by residues W22, 82–83 (SL), and 143–147 (FLALQ). S82 acts as the Nucleophile in catalysis. Active-site residues include D207 and H235. Residue H235 participates in substrate binding.

It belongs to the AB hydrolase superfamily. Carboxylesterase BioH family. As to quaternary structure, monomer.

It localises to the cytoplasm. It catalyses the reaction 6-carboxyhexanoyl-[ACP] methyl ester + H2O = 6-carboxyhexanoyl-[ACP] + methanol + H(+). It functions in the pathway cofactor biosynthesis; biotin biosynthesis. Its function is as follows. The physiological role of BioH is to remove the methyl group introduced by BioC when the pimeloyl moiety is complete. It allows to synthesize pimeloyl-ACP via the fatty acid synthetic pathway through the hydrolysis of the ester bonds of pimeloyl-ACP esters. The sequence is that of Pimeloyl-[acyl-carrier protein] methyl ester esterase from Escherichia coli O81 (strain ED1a).